A 528-amino-acid chain; its full sequence is Glutamyl-tRNA(Gln) amidotransferase subunit A, mitochondrial (528 aa).

The Charge relay system role is filled by lysine 76. The segment at 147–166 (QYREKRKQNPHSKNEDSDWL) is disordered. Residue serine 171 is the Charge relay system of the active site. Residue serine 195 is the Acyl-ester intermediate of the active site.

Belongs to the amidase family. GatA subfamily. As to quaternary structure, subunit of the heterotrimeric GatCAB amidotransferase (AdT) complex, composed of A (QRSL1), B (GATB) and C (GATC) subunits.

It is found in the mitochondrion. It catalyses the reaction L-glutamyl-tRNA(Gln) + L-glutamine + ATP + H2O = L-glutaminyl-tRNA(Gln) + L-glutamate + ADP + phosphate + H(+). In terms of biological role, allows the formation of correctly charged Gln-tRNA(Gln) through the transamidation of misacylated Glu-tRNA(Gln) in the mitochondria. The reaction takes place in the presence of glutamine and ATP through an activated gamma-phospho-Glu-tRNA(Gln). The polypeptide is Glutamyl-tRNA(Gln) amidotransferase subunit A, mitochondrial (Macaca fascicularis (Crab-eating macaque)).